The sequence spans 126 residues: Larval cuticle protein 2 (126 aa).

An N-terminal signal peptide occupies residues 1–16; sequence MFKFVMILAVVGVATA. The Chitin-binding type R&amp;R domain occupies 39–100; that stretch reads ADGFDSSLHT…PSGAWIPTPP (62 aa).

In terms of biological role, component of the larval cuticle. This is Larval cuticle protein 2 (Lcp2) from Drosophila melanogaster (Fruit fly).